A 20-amino-acid polypeptide reads, in one-letter code: DELTA-actitoxin-Afr1b (20 aa).

Belongs to the actinoporin family. Sea anemone subfamily. As to quaternary structure, octamer or nonamer in membranes. Monomer in the soluble state.

The protein localises to the secreted. The protein resides in the nematocyst. It is found in the target cell membrane. Functionally, pore-forming toxin (PFT) that consists of a crown-shaped octamer or nonamer that forms cation-selective hydrophilic pores of about 1.5 nm (inside) and 13 nm (outside) and causes cytolysis. It causes cardiac stimulation. Also causes hemolysis (HC(50)=0.4 nM). Interestingly, the Phe-16 is crucial for hemolysis. Pore formation is a multi-step process that involves specific recognition of membrane sphingomyelin (but neither cholesterol nor phosphatidylcholine) using aromatic rich region and adjacent phosphocholine (POC) binding site, firm binding to the membrane (mainly driven by hydrophobic interactions) accompanied by the transfer of the N-terminal region to the lipid-water interface and finally pore formation after oligomerization of monomers. It is probable that a dimeric form is an assembly intermediate before the complete oligomerization. The formation of stable pores occurs only in vesicles composed of DOPC/SM (there is no oligomerization when the PFT is treated with vesicles of DOPC or SM alone). The transmembrane pore displays 8 lateral perforations, one at each subunit-subunit interface, partially occupied by the acyl-chain region of a bridging lipid. Each pore contains 24 lipid molecules, firmly bound to each subunit, that is, 3 lipids (L1, L2, L3, L4 and/or L5) are associated to each subunit. Lipid L1 bridges 2 subunits, whereas lipids L2 and L3 bind to sites at single subunit. The chain is DELTA-actitoxin-Afr1b from Actinia fragacea (Strawberry anemone).